The following is a 134-amino-acid chain: D-ribose pyranase (134 aa).

Residue H20 is the Proton donor of the active site. Substrate contacts are provided by residues D28, H101, and 123-125 (YSN).

It belongs to the RbsD / FucU family. RbsD subfamily. As to quaternary structure, homodecamer.

The protein localises to the cytoplasm. It catalyses the reaction beta-D-ribopyranose = beta-D-ribofuranose. Its pathway is carbohydrate metabolism; D-ribose degradation; D-ribose 5-phosphate from beta-D-ribopyranose: step 1/2. Functionally, catalyzes the interconversion of beta-pyran and beta-furan forms of D-ribose. This Pseudomonas entomophila (strain L48) protein is D-ribose pyranase.